A 239-amino-acid polypeptide reads, in one-letter code: Sugar fermentation stimulation protein homolog (239 aa).

It belongs to the SfsA family.

The protein is Sugar fermentation stimulation protein homolog of Maridesulfovibrio salexigens (strain ATCC 14822 / DSM 2638 / NCIMB 8403 / VKM B-1763) (Desulfovibrio salexigens).